Here is a 388-residue protein sequence, read N- to C-terminus: Succinate--CoA ligase [ADP-forming] subunit beta (388 aa).

In terms of domain architecture, ATP-grasp spans 9-244 (KEILRKFGVA…LDEEDPAEIE (236 aa)). Residues K46, 53-55 (GRG), E99, A102, and E107 each bind ATP. The Mg(2+) site is built by N199 and D213. Residues N264 and 321–323 (GIM) each bind substrate.

The protein belongs to the succinate/malate CoA ligase beta subunit family. As to quaternary structure, heterotetramer of two alpha and two beta subunits. Requires Mg(2+) as cofactor.

The enzyme catalyses succinate + ATP + CoA = succinyl-CoA + ADP + phosphate. It catalyses the reaction GTP + succinate + CoA = succinyl-CoA + GDP + phosphate. It participates in carbohydrate metabolism; tricarboxylic acid cycle; succinate from succinyl-CoA (ligase route): step 1/1. Its function is as follows. Succinyl-CoA synthetase functions in the citric acid cycle (TCA), coupling the hydrolysis of succinyl-CoA to the synthesis of either ATP or GTP and thus represents the only step of substrate-level phosphorylation in the TCA. The beta subunit provides nucleotide specificity of the enzyme and binds the substrate succinate, while the binding sites for coenzyme A and phosphate are found in the alpha subunit. This chain is Succinate--CoA ligase [ADP-forming] subunit beta, found in Burkholderia lata (strain ATCC 17760 / DSM 23089 / LMG 22485 / NCIMB 9086 / R18194 / 383).